Consider the following 897-residue polypeptide: Translation initiation factor IF-2 (897 aa).

Disordered stretches follow at residues 69 to 88 (RKTKSTISVQGTGGKNKEVQ) and 95 to 304 (RTYV…NAMK). The span at 101 to 161 (SALEDEQRQA…EEKARIEAQQ (61 aa)) shows a compositional bias: basic and acidic residues. The span at 162-179 (KARQAQQPAKAAGSTAQQ) shows a compositional bias: low complexity. 4 stretches are compositionally biased toward basic and acidic residues: residues 180–196 (EAEKMAKREAEELKRQQ), 203–217 (KAEELAAKKAEEARV), 226–239 (WAEEEAARAKESSD), and 277–286 (RREDDRDARN). Residues 287–296 (PRARKGKRGK) show a composition bias toward basic residues. The tr-type G domain occupies 397 to 566 (PRAPVVTIMG…LIQSEVLELK (170 aa)). The tract at residues 406 to 413 (GHVDHGKT) is G1. 406–413 (GHVDHGKT) is a GTP binding site. The tract at residues 431–435 (GITQH) is G2. Residues 452 to 455 (DTPG) are G3. Residues 452–456 (DTPGH) and 506–509 (NKID) each bind GTP. Positions 506-509 (NKID) are G4. The segment at 542–544 (SAK) is G5.

Belongs to the TRAFAC class translation factor GTPase superfamily. Classic translation factor GTPase family. IF-2 subfamily.

The protein resides in the cytoplasm. One of the essential components for the initiation of protein synthesis. Protects formylmethionyl-tRNA from spontaneous hydrolysis and promotes its binding to the 30S ribosomal subunits. Also involved in the hydrolysis of GTP during the formation of the 70S ribosomal complex. The polypeptide is Translation initiation factor IF-2 (Aeromonas hydrophila subsp. hydrophila (strain ATCC 7966 / DSM 30187 / BCRC 13018 / CCUG 14551 / JCM 1027 / KCTC 2358 / NCIMB 9240 / NCTC 8049)).